The following is a 53-amino-acid chain: MFRWGIIFLVIALIAAALGFGGLAGTAAGAAKIVFVVGIILFLVSLFMGRKRP.

2 helical membrane-spanning segments follow: residues 4-24 and 30-48; these read WGIIFLVIALIAAALGFGGLA and AAKIVFVVGIILFLVSLFM.

Belongs to the UPF0391 family.

The protein localises to the cell membrane. In Escherichia coli O6:K15:H31 (strain 536 / UPEC), this protein is UPF0391 membrane protein YtjA.